The chain runs to 92 residues: MPRSLKKGPFIDLHLLKKVEKAVESGDKKPVKTWSRRSMIIPNMIGLTIAVHNGRQHVPVFVTEEMIGHKLGEFAPTRTYRGHAADKKAKKR.

This sequence belongs to the universal ribosomal protein uS19 family.

Protein S19 forms a complex with S13 that binds strongly to the 16S ribosomal RNA. The polypeptide is Small ribosomal subunit protein uS19 (Aeromonas hydrophila subsp. hydrophila (strain ATCC 7966 / DSM 30187 / BCRC 13018 / CCUG 14551 / JCM 1027 / KCTC 2358 / NCIMB 9240 / NCTC 8049)).